We begin with the raw amino-acid sequence, 302 residues long: Ribosomal RNA small subunit methyltransferase H (302 aa).

Residues 36–38 (GGH), D56, F84, D99, and Q106 contribute to the S-adenosyl-L-methionine site.

This sequence belongs to the methyltransferase superfamily. RsmH family.

The protein localises to the cytoplasm. It catalyses the reaction cytidine(1402) in 16S rRNA + S-adenosyl-L-methionine = N(4)-methylcytidine(1402) in 16S rRNA + S-adenosyl-L-homocysteine + H(+). In terms of biological role, specifically methylates the N4 position of cytidine in position 1402 (C1402) of 16S rRNA. This chain is Ribosomal RNA small subunit methyltransferase H, found in Christiangramia forsetii (strain DSM 17595 / CGMCC 1.15422 / KT0803) (Gramella forsetii).